Consider the following 217-residue polypeptide: Putative thymidylate synthase (217 aa).

Cys139 is a catalytic residue.

The protein belongs to the thymidylate synthase family. Archaeal-type ThyA subfamily. In terms of assembly, monomer.

The protein localises to the cytoplasm. The protein operates within pyrimidine metabolism; dTTP biosynthesis. In terms of biological role, may catalyze the biosynthesis of dTMP using an unknown cosubstrate. This is Putative thymidylate synthase from Methanosarcina acetivorans (strain ATCC 35395 / DSM 2834 / JCM 12185 / C2A).